The primary structure comprises 197 residues: Na(+)-translocating NADH-quinone reductase subunit E (197 aa).

The next 6 helical transmembrane spans lie at 11–31 (SVFI…FLAV), 35–55 (VSTA…SVPA), 76–96 (FLKF…LEMF), 108–128 (LGIY…VSFM), 139–159 (VVYG…LAGI), and 175–195 (LGIT…FSGI).

The protein belongs to the NqrDE/RnfAE family. Composed of six subunits; NqrA, NqrB, NqrC, NqrD, NqrE and NqrF.

The protein resides in the cell inner membrane. It carries out the reaction a ubiquinone + n Na(+)(in) + NADH + H(+) = a ubiquinol + n Na(+)(out) + NAD(+). In terms of biological role, NQR complex catalyzes the reduction of ubiquinone-1 to ubiquinol by two successive reactions, coupled with the transport of Na(+) ions from the cytoplasm to the periplasm. NqrA to NqrE are probably involved in the second step, the conversion of ubisemiquinone to ubiquinol. The protein is Na(+)-translocating NADH-quinone reductase subunit E of Neisseria meningitidis serogroup A / serotype 4A (strain DSM 15465 / Z2491).